The following is a 167-amino-acid chain: Large ribosomal subunit protein uL5 (167 aa).

Belongs to the universal ribosomal protein uL5 family. In terms of assembly, part of the 50S ribosomal subunit; contacts the 5S rRNA and probably tRNA. Forms a bridge to the 30S subunit in the 70S ribosome.

Its function is as follows. This is one of the proteins that bind and probably mediate the attachment of the 5S RNA into the large ribosomal subunit, where it forms part of the central protuberance. In the 70S ribosome it contacts protein S13 of the 30S subunit (bridge B1b), connecting the 2 subunits; this bridge is implicated in subunit movement. May contact the P site tRNA; the 5S rRNA and some of its associated proteins might help stabilize positioning of ribosome-bound tRNAs. The chain is Large ribosomal subunit protein uL5 from Methanoculleus marisnigri (strain ATCC 35101 / DSM 1498 / JR1).